The primary structure comprises 173 residues: Lipid A deacylase PagL (173 aa).

Positions 1-23 (MKKLLPLAVLAALSSVHVASAQA) are cleaved as a signal peptide. At 25 to 28 (DVSA) the chain is on the periplasmic side. The chain crosses the membrane as a beta stranded span at residues 29 to 32 (AVGA). A topological domain (periplasmic) is located at residue Thr-33. A beta stranded transmembrane segment spans residues 34–49 (GQSGMTYRLGLSWDWD). At 50 to 56 (KSWWQTS) the chain is on the extracellular side. Residues 57–71 (TGRLTGYWDAGYTYW) form a beta stranded membrane-spanning segment. The Periplasmic segment spans residues 72–73 (EG). The chain crosses the membrane as a beta stranded span at residues 74–89 (GDEGAGKHSLSFAPVF). Val-90 is a topological domain (extracellular). The beta stranded transmembrane segment at 91-93 (YEF) threads the bilayer. Over 94–95 (AG) the chain is Periplasmic. The chain crosses the membrane as a beta stranded span at residues 96–98 (DSI). The Extracellular portion of the chain corresponds to 99–100 (KP). The chain crosses the membrane as a beta stranded span at residues 101-115 (FIEAGIGVAAFSGTR). Residues 116–117 (VG) are Periplasmic-facing. Residues 118 to 128 (DQNLGSSLNFE) traverse the membrane as a beta stranded segment. At 129-138 (DRIGAGLKFA) the chain is on the extracellular side. The chain crosses the membrane as a beta stranded span at residues 139-148 (NGQSVGVRAI). Active-site charge relay system residues include His-149, Ser-151, and Glu-163. The Periplasmic segment spans residues 149–173 (HYSNAGLKQPNDGIESYSLFYKIPI).

This sequence belongs to the PagL family. In terms of assembly, homodimer.

The protein resides in the cell outer membrane. It catalyses the reaction a 3-(acyloxy)acyl derivative of bacterial toxin + H2O = a 3-hydroxyacyl derivative of bacterial toxin + a fatty acid + H(+). Decreased activity at low temperatures (15 or 21 degrees Celsius). Its function is as follows. Has lipid A 3-O-deacylase activity. Hydrolyzes the ester bond at the 3 position of lipid A, a bioactive component of lipopolysaccharide (LPS), thereby releasing the primary fatty acyl moiety. Lacks fatty acyl chain-length specificity as removes both 3-OH C10 and 3-OH C14 fatty acids from lipid A. The polypeptide is Lipid A deacylase PagL (Pseudomonas aeruginosa (strain ATCC 15692 / DSM 22644 / CIP 104116 / JCM 14847 / LMG 12228 / 1C / PRS 101 / PAO1)).